We begin with the raw amino-acid sequence, 389 residues long: Serpin-Z3 (389 aa).

Residues 337 to 361 are RCL; sequence GTEAAAVSVAIMMPQCLMRNPDFVA.

The protein belongs to the serpin family.

Probable serine protease inhibitor. This Arabidopsis thaliana (Mouse-ear cress) protein is Serpin-Z3.